The following is a 101-amino-acid chain: NAD(P)H-quinone oxidoreductase subunit 4L, chloroplastic (101 aa).

3 helical membrane-spanning segments follow: residues 2-22 (MTEY…YGLI), 32-52 (MCLE…SDLF), and 61-81 (IFSI…PAIV).

It belongs to the complex I subunit 4L family. As to quaternary structure, NDH is composed of at least 16 different subunits, 5 of which are encoded in the nucleus.

Its subcellular location is the plastid. The protein localises to the chloroplast thylakoid membrane. It carries out the reaction a plastoquinone + NADH + (n+1) H(+)(in) = a plastoquinol + NAD(+) + n H(+)(out). It catalyses the reaction a plastoquinone + NADPH + (n+1) H(+)(in) = a plastoquinol + NADP(+) + n H(+)(out). Its function is as follows. NDH shuttles electrons from NAD(P)H:plastoquinone, via FMN and iron-sulfur (Fe-S) centers, to quinones in the photosynthetic chain and possibly in a chloroplast respiratory chain. The immediate electron acceptor for the enzyme in this species is believed to be plastoquinone. Couples the redox reaction to proton translocation, and thus conserves the redox energy in a proton gradient. The polypeptide is NAD(P)H-quinone oxidoreductase subunit 4L, chloroplastic (Calycanthus floridus var. glaucus (Eastern sweetshrub)).